The following is a 480-amino-acid chain: NADH-quinone oxidoreductase subunit N (480 aa).

13 helical membrane-spanning segments follow: residues 5-25 (NFLCIEQELKLIALLVILFLY), 40-60 (IAIVGFAIVIISEFPPYFTMY), 69-89 (ISSQLTFFMKSILNVATFLVF), 110-130 (VIMLISLLGMYFMISAENFVM), 162-182 (YILTSALSSGVMLFGLSFLYG), 204-224 (LGFVFFFGGLGFKLSLVPFHL), 237-257 (VTAYLSVVSKGAATFALIFVL), 266-286 (LIWNNILCWLLLATIVLGNLF), 296-316 (FFAFSSISQAGYILLGIIAGT), 324-344 (IFYTLVYLFSNLAAFGVIASV), 368-388 (AFVMMLAVFSLGGIPPFAGFF), 404-424 (ILVFIALLNTVMSLYYYLLIV), and 450-470 (MVICTIGIFVIGFLSAIYEYI).

It belongs to the complex I subunit 2 family. NDH-1 is composed of 14 different subunits. Subunits NuoA, H, J, K, L, M, N constitute the membrane sector of the complex.

It is found in the cell inner membrane. It catalyses the reaction a quinone + NADH + 5 H(+)(in) = a quinol + NAD(+) + 4 H(+)(out). In terms of biological role, NDH-1 shuttles electrons from NADH, via FMN and iron-sulfur (Fe-S) centers, to quinones in the respiratory chain. The immediate electron acceptor for the enzyme in this species is believed to be a menaquinone. Couples the redox reaction to proton translocation (for every two electrons transferred, four hydrogen ions are translocated across the cytoplasmic membrane), and thus conserves the redox energy in a proton gradient. The sequence is that of NADH-quinone oxidoreductase subunit N from Azobacteroides pseudotrichonymphae genomovar. CFP2.